Here is a 504-residue protein sequence, read N- to C-terminus: Amphoterin-induced protein 3 (504 aa).

The N-terminal stretch at 1 to 19 is a signal peptide; the sequence is MTWLVLLGTLLCMLRVGLG. Over 20 to 383 the chain is Extracellular; the sequence is TPDSEGFPPR…PRPEPEAFNT (364 aa). The region spanning 25 to 61 is the LRRNT domain; that stretch reads GFPPRALHNCPYKCICAADLLSCTGLGLQDVPAELPA. 2 disulfide bridges follow: Cys34–Cys40 and Cys38–Cys47. 6 LRR repeats span residues 62–83, 86–107, 110–133, 134–155, 158–178, and 184–207; these read ATADLDLSHNALQRLRPGWLAP, QLRALHLDHNELDALGRGVFVN, GLRLLDLSSNTLRALGRHDLDGLG, ALEKLLLFNNRLVHLDEHAFHG, ALSHLYLGCNELASFSFDHLH, and HLLTLDLSSNRLGHISVPELAALP. The N-linked (GlcNAc...) asparagine glycan is linked to Asn107. Positions 219–275 constitute an LRRCT domain; the sequence is NPLPCDCRLYHLLQRWHQRGLSAVRDFAREYVCLAFKVPASRVRFFQHSRVFENCSS. 3 disulfide bridges follow: Cys223-Cys251, Cys225-Cys273, and Cys300-Cys352. N-linked (GlcNAc...) asparagine glycans are attached at residues Asn272, Asn301, Asn362, and Asn368. Positions 277 to 370 constitute an Ig-like C2-type domain; sequence PALGLERPEE…HNQTHEYNVS (94 aa). A helical membrane pass occupies residues 384 to 404; that stretch reads GFTTLLGCAVGLVLVLLYLFA. Over 405–504 the chain is Cytoplasmic; sequence PPCRCCRRAC…SIGSEGPMTT (100 aa). Residues 422-448 are disordered; sequence TPSPLQELSAQSSVLSTTPPDAPSRKA. Residues 424–440 show a composition bias toward polar residues; sequence SPLQELSAQSSVLSTTP.

The protein belongs to the immunoglobulin superfamily. AMIGO family. Binds AMIGO1 or AMIGO2.

Its subcellular location is the membrane. May mediate heterophilic cell-cell interaction. May contribute to signal transduction through its intracellular domain. This chain is Amphoterin-induced protein 3, found in Homo sapiens (Human).